We begin with the raw amino-acid sequence, 217 residues long: UPF0319 protein VP1009 (217 aa).

The signal sequence occupies residues 1–21 (MRLKTWIVAFFLGLFGTTVNA).

The protein belongs to the UPF0319 family.

The protein is UPF0319 protein VP1009 of Vibrio parahaemolyticus serotype O3:K6 (strain RIMD 2210633).